The primary structure comprises 593 residues: MDPPAAVLLPPQSRTCTHLAEETCMDQERSPATAEAGRDSFPSGQLPSSSLTEADWFWDEHIQAKRARVETIVRGMCLSPSSSVSGRARESLRCPEKGRERKRKQSLPMHQGPLKSSPAWERGPKKGGTRVKEQLHLLKQQLRHLQEHVLQATEPRAPAQSPGGTEPRSSPRARPRNSCSSGAWTVENEPHQSSSKDLCGAVKPGAAEVLQYSEEPMLCPSGPRALVETLRKELSRAVSQAVDSVLQQVLFDPQRHLTQQERSCQGLASEGRNQPSPPGRSAYKDPLALATLPRKIQPQAGVPLGNSTLARPLDSPMCPVSPRGVPRSYQSPLPNCPLTNVPSHTWENQMLRQLLGRGPDGQWSGSPPQDAAFQSHTSPESAQQPWGLSQQQLPLSLTPVHLESRPLPPPVKMEQGVLRGVADSLPFSSIHIQEGLSPGHLKKAKLMFFFTRYPSSSLLKAYFPDVQFNRCITSQMIKWFSNFREFYYIQMEKYARQALSDGITNAQALAVLRDSELFRVLNTHYNKGNDFEVPDCFLEIAALTLKEFFRAVLAGKDSDPSWKKPIYKVISKLDSDVPEMLKSPSFLPGLFPS.

Disordered stretches follow at residues 24–48 (CMDQ…QLPS), 79–130 (SPSS…GGTR), 153–199 (TEPR…KDLC), 260–284 (QERS…SAYK), 298–333 (PQAG…QSPL), and 356–388 (GRGP…PWGL). Residues 87-99 (RARESLRCPEKGR) show a composition bias toward basic and acidic residues. Residues 167-181 (PRSSPRARPRNSCSS) are compositionally biased toward low complexity. Polar residues predominate over residues 363-380 (WSGSPPQDAAFQSHTSPE). The region spanning 433–491 (QEGLSPGHLKKAKLMFFFTRYPSSSLLKAYFPDVQFNRCITSQMIKWFSNFREFYYIQM) is the Prospero-type homeo domain. The homeo-Prospero stretch occupies residues 433 to 591 (QEGLSPGHLK…KSPSFLPGLF (159 aa)). Positions 492 to 591 (EKYARQALSD…KSPSFLPGLF (100 aa)) constitute a Prospero domain.

The protein belongs to the Prospero homeodomain family. In terms of tissue distribution, expressed in testis.

The protein resides in the nucleus. Transcription regulator. Does not seem to be essential for embryonic development and postnatal survival. This is Prospero homeobox protein 2 (Prox2) from Mus musculus (Mouse).